The primary structure comprises 333 residues: MTKLLNFVILASVLTVTAHALTYDLNNSDELFKNFAIKYNKTYVSDEERAIKLENFKNNLKMINEKNMASKYAVFDINEYSDLNKNALLRRTTGFRLGLKKNPSAFTMTECSVVVIKDEPQALLPETLDWRDKHGVTPVKNQMECGSCWAFSTIANIESLYNIKYDKALNLSEQHLVNCDNINNGCAGGLMHWALESILQEGGVVSAENEPYYGFDGVCKKSPFELSISGSRRYVLQNENKLRELLVVNGPISVAIDVSDLINYKAGIADICENNEGLNHAVLLVGYGVKNDVPYWILKNSWGAEWGEEGYFRVQRDKNSCGMMNEYASSAIL.

The first 20 residues, 1 to 20 (MTKLLNFVILASVLTVTAHA), serve as a signal peptide directing secretion. Positions 21–124 (LTYDLNNSDE…VIKDEPQALL (104 aa)) are cleaved as a propeptide — activation peptide. 3 disulfide bridges follow: cysteine 145–cysteine 186, cysteine 179–cysteine 219, and cysteine 272–cysteine 321. The active site involves cysteine 148. N-linked (GlcNAc...) asparagine; by host glycosylation occurs at asparagine 170. Active-site residues include histidine 280 and asparagine 300.

The protein belongs to the peptidase C1 family. In terms of processing, synthesized as an inactive proenzyme and activated by proteolytic removal of the inhibitory propeptide.

It catalyses the reaction Endopeptidase of broad specificity, hydrolyzing substrates of both cathepsin L and cathepsin B.. Cysteine protease that plays an essential role in host liquefaction to facilitate horizontal transmission of the virus. May participate in the degradation of foreign protein expressed by the baculovirus system. The chain is Viral cathepsin (VCATH) from Cydia pomonella granulosis virus (isolate Mexico/1963) (CpGV).